The following is a 100-amino-acid chain: ATP-dependent Clp protease adapter protein ClpS (100 aa).

The protein belongs to the ClpS family. In terms of assembly, binds to the N-terminal domain of the chaperone ClpA.

Its function is as follows. Involved in the modulation of the specificity of the ClpAP-mediated ATP-dependent protein degradation. The protein is ATP-dependent Clp protease adapter protein ClpS of Nitratidesulfovibrio vulgaris (strain DSM 19637 / Miyazaki F) (Desulfovibrio vulgaris).